A 175-amino-acid polypeptide reads, in one-letter code: Peptide deformylase (175 aa).

Fe cation contacts are provided by C96 and H138. The active site involves E139. Fe cation is bound at residue H142.

This sequence belongs to the polypeptide deformylase family. It depends on Fe(2+) as a cofactor.

The enzyme catalyses N-terminal N-formyl-L-methionyl-[peptide] + H2O = N-terminal L-methionyl-[peptide] + formate. In terms of biological role, removes the formyl group from the N-terminal Met of newly synthesized proteins. Requires at least a dipeptide for an efficient rate of reaction. N-terminal L-methionine is a prerequisite for activity but the enzyme has broad specificity at other positions. The protein is Peptide deformylase of Rhodopseudomonas palustris (strain ATCC BAA-98 / CGA009).